Here is a 504-residue protein sequence, read N- to C-terminus: Anaerobic nitric oxide reductase transcription regulator NorR (504 aa).

The residue at position 57 (Asp57) is a 4-aspartylphosphate. One can recognise a Sigma-54 factor interaction domain in the interval 187 to 416 (MIGLSPGMTQ…LEHAIHRAVV (230 aa)). Residues 215–222 (GETGTGKE) and 278–287 (ADNGTLFLDE) contribute to the ATP site. The segment at residues 479 to 498 (WAACARMLETDVANLHRLAK) is a DNA-binding region (H-T-H motif).

Its pathway is nitrogen metabolism; nitric oxide reduction. In terms of biological role, required for the expression of anaerobic nitric oxide (NO) reductase, acts as a transcriptional activator for at least the norVW operon. Activation also requires sigma-54. In Shigella dysenteriae serotype 1 (strain Sd197), this protein is Anaerobic nitric oxide reductase transcription regulator NorR.